A 324-amino-acid chain; its full sequence is Methionyl-tRNA formyltransferase (324 aa).

112 to 115 is a binding site for (6S)-5,6,7,8-tetrahydrofolate; that stretch reads SILP.

This sequence belongs to the Fmt family.

The catalysed reaction is L-methionyl-tRNA(fMet) + (6R)-10-formyltetrahydrofolate = N-formyl-L-methionyl-tRNA(fMet) + (6S)-5,6,7,8-tetrahydrofolate + H(+). Functionally, attaches a formyl group to the free amino group of methionyl-tRNA(fMet). The formyl group appears to play a dual role in the initiator identity of N-formylmethionyl-tRNA by promoting its recognition by IF2 and preventing the misappropriation of this tRNA by the elongation apparatus. The protein is Methionyl-tRNA formyltransferase of Shewanella loihica (strain ATCC BAA-1088 / PV-4).